A 480-amino-acid chain; its full sequence is ESX-1 secretion system ATPase EccB1 (480 aa).

Residues 44 to 64 form a helical membrane-spanning segment; sequence IALGIVVAVLILAGAALLAYF. The tract at residues 461-480 is disordered; the sequence is DTLPADPSPRKVPAGASGAP.

The protein belongs to the EccB family. As to quaternary structure, part of the ESX-1 / type VII secretion system (T7SS), which is composed of cytosolic and membrane components. The ESX-1 membrane complex is composed of EccB1, EccCa1, EccCb1, EccD1 and EccE1.

The protein localises to the cell inner membrane. Its function is as follows. An ATPase. Part of the ESX-1 specialized secretion system, which delivers several virulence factors to host cells during infection, including the key virulence factors EsxA (ESAT-6) and EsxB (CFP-10). In Mycobacterium tuberculosis (strain CDC 1551 / Oshkosh), this protein is ESX-1 secretion system ATPase EccB1.